A 258-amino-acid polypeptide reads, in one-letter code: Lysine-rich coiled-coil protein 1 (258 aa).

Residues 142–258 form a disordered region; it reads DNSTSTHQAS…MLWDQSILGF (117 aa). Residues 150-161 show a composition bias toward basic residues; that stretch reads ASHKQIHQKRKR. Basic and acidic residues-rich tracts occupy residues 162–175, 183–213, and 220–232; these read HPEE…EEWS, CKEI…TEKL, and KGRD…EERK. Residues 211-248 are a coiled coil; it reads EKLKNRKEKKGRDVVSKKEERKRTKKKKEQGQERTEEE.

This Pongo abelii (Sumatran orangutan) protein is Lysine-rich coiled-coil protein 1 (KRCC1).